Here is a 449-residue protein sequence, read N- to C-terminus: Glucose-6-phosphate isomerase (449 aa).

Glu291 serves as the catalytic Proton donor. Catalysis depends on residues His312 and Lys426.

This sequence belongs to the GPI family.

The protein resides in the cytoplasm. It carries out the reaction alpha-D-glucose 6-phosphate = beta-D-fructose 6-phosphate. It participates in carbohydrate biosynthesis; gluconeogenesis. Its pathway is carbohydrate degradation; glycolysis; D-glyceraldehyde 3-phosphate and glycerone phosphate from D-glucose: step 2/4. Its function is as follows. Catalyzes the reversible isomerization of glucose-6-phosphate to fructose-6-phosphate. The chain is Glucose-6-phosphate isomerase from Streptococcus pyogenes serotype M12 (strain MGAS2096).